Reading from the N-terminus, the 172-residue chain is MTILPRHKDVAKSRLKMSNPWHLLAVGFGSGLSPIVPGTMGSLAAIPFWYLMTFLPWQLYSLVVMLGICIGVYLCHQTAKDMGVHDHGSIVWDEFIGMWITLMALPTNDWQWVAAGFVIFRILDMWKPWPIRWFDRNVHGGMGIMIDDIVAGVISAGILYFIGHHWPLGILS.

Topologically, residues 1-31 are cytoplasmic; the sequence is MTILPRHKDVAKSRLKMSNPWHLLAVGFGSG. A helical membrane pass occupies residues 32-52; it reads LSPIVPGTMGSLAAIPFWYLM. Position 53 (T53) is a topological domain, periplasmic. The chain crosses the membrane as a helical span at residues 54–74; that stretch reads FLPWQLYSLVVMLGICIGVYL. The Cytoplasmic portion of the chain corresponds to 75–141; sequence CHQTAKDMGV…RWFDRNVHGG (67 aa). Residues 142-162 traverse the membrane as a helical segment; the sequence is MGIMIDDIVAGVISAGILYFI. Residues 163 to 172 are Periplasmic-facing; sequence GHHWPLGILS.

It depends on Mg(2+) as a cofactor.

The protein resides in the cell inner membrane. It carries out the reaction a 1,2-diacyl-sn-glycero-3-phospho-(1'-sn-glycero-3'-phosphate) + H2O = a 1,2-diacyl-sn-glycero-3-phospho-(1'-sn-glycerol) + phosphate. Its pathway is phospholipid metabolism; phosphatidylglycerol biosynthesis; phosphatidylglycerol from CDP-diacylglycerol: step 2/2. Functionally, lipid phosphatase which dephosphorylates phosphatidylglycerophosphate (PGP) to phosphatidylglycerol (PG). The polypeptide is Phosphatidylglycerophosphatase A (pgpA) (Escherichia coli (strain K12)).